A 67-amino-acid chain; its full sequence is Probable Sec-independent protein translocase protein TatE (67 aa).

A helical transmembrane segment spans residues 1–21; that stretch reads MEGISIAKLLIIGALIVLLFG. Residues 46–67 form a disordered region; the sequence is EDTSATRTTAEDVPAERVVHKD.

It belongs to the TatA/E family. TatE subfamily.

It is found in the cell inner membrane. Functionally, part of the twin-arginine translocation (Tat) system that transports large folded proteins containing a characteristic twin-arginine motif in their signal peptide across membranes. TatE shares overlapping functions with TatA. The chain is Probable Sec-independent protein translocase protein TatE from Pantoea vagans (strain C9-1) (Pantoea agglomerans (strain C9-1)).